A 765-amino-acid chain; its full sequence is MRWSSPTSSSLSLVALLLVAHVDAAERATSPPVHPSPPMKGAGVWSAAYASAKELVSQMTLEEMVNITGGFATTENVCAGNTGTVPRLGWPGLCLHDAGNGVRATDLVSAYPSGLHVGASWDKNLTYERGLYMGKEFKAKGVNVLLGPNAGALGRVPVAGRNWEGFTIDPYLSGILNAESIVGHQEAGVIATTKHFIGNEQELYRRPYFGVEAVSSNIDDKTVHELYMWPFMDSVKAGAASAMCSYQRVNNTYACMNSKLMNGLLKGELEFEGFIMLDWNAVHTVDSAEAGLDMVMPRGNWGTNLTAAINNGTTSKERLVDMATRIVAAWYFVGQDGDKFPKPGVGMYNLTQPHTPVEARVSESKPIIMEGAVAGHVLLKNEKNALPLKKPKMLSVYGYDATVPRTKNTDVLFTLGYYSSAEMAQAVLGTEQHFDQAAKGGTIISGGRAGANGPPYISDPLSAIQHRAADDDTWVNWDLDSGNPDVNSGSDACLVFINAIATEGWDRDGLHDDFSDGLVLNVASKCENTIVVIHNAGVRLVDQWVDHPNVTALVMAHLPGQDSGAALVKLLYGEEYFSGKLPYTIPHNESDYGHVYRSCAHDRAQDDKDPQCDFTEGVYIDYRDFDARNVTPRFEFGFGLGYTTFEFSELSIETSENLTAGVGSGSIWDHVAIVHATIKNNGSADGAEVAQLYLGIPNSPPKQLRGFEKVALSPGVSAPVRFELTRRDFSIWDVVAQKWVVQEGSYSVHVGASSRDIRLSDDIKI.

Residues 1–24 (MRWSSPTSSSLSLVALLLVAHVDA) form the signal peptide. 10 N-linked (GlcNAc...) asparagine glycosylation sites follow: asparagine 66, asparagine 124, asparagine 250, asparagine 304, asparagine 311, asparagine 349, asparagine 549, asparagine 588, asparagine 657, and asparagine 681.

This sequence belongs to the glycosyl hydrolase 3 family.

It localises to the secreted. It carries out the reaction Hydrolysis of terminal, non-reducing beta-D-glucosyl residues with release of beta-D-glucose.. The protein operates within glycan metabolism; cellulose degradation. Beta-glucosidases are one of a number of cellulolytic enzymes involved in the degradation of cellulosic biomass. Catalyzes the last step releasing glucose from the inhibitory cellobiose. Shows higher activities on cellobiose and cellotriose but lower activities on laminarioligosaccharides and polymers. The sequence is that of Beta-glucosidase cel3A from Pyricularia oryzae (strain 70-15 / ATCC MYA-4617 / FGSC 8958) (Rice blast fungus).